Reading from the N-terminus, the 155-residue chain is Aspartate carbamoyltransferase regulatory chain (155 aa).

Zn(2+) is bound by residues cysteine 112, cysteine 117, cysteine 140, and cysteine 143.

This sequence belongs to the PyrI family. As to quaternary structure, contains catalytic and regulatory chains. Requires Zn(2+) as cofactor.

Functionally, involved in allosteric regulation of aspartate carbamoyltransferase. This is Aspartate carbamoyltransferase regulatory chain from Phocaeicola vulgatus (strain ATCC 8482 / DSM 1447 / JCM 5826 / CCUG 4940 / NBRC 14291 / NCTC 11154) (Bacteroides vulgatus).